Consider the following 563-residue polypeptide: Phosphomethylpyrimidine synthase (563 aa).

Substrate is bound by residues N180, M209, Y238, H274, 294 to 296, 335 to 338, and E374; these read SRG and DGLR. H378 provides a ligand contact to Zn(2+). A substrate-binding site is contributed by Y401. A Zn(2+)-binding site is contributed by H442. C522, C525, and C530 together coordinate [4Fe-4S] cluster.

Belongs to the ThiC family. The cofactor is [4Fe-4S] cluster.

The enzyme catalyses 5-amino-1-(5-phospho-beta-D-ribosyl)imidazole + S-adenosyl-L-methionine = 4-amino-2-methyl-5-(phosphooxymethyl)pyrimidine + CO + 5'-deoxyadenosine + formate + L-methionine + 3 H(+). The protein operates within cofactor biosynthesis; thiamine diphosphate biosynthesis. Its function is as follows. Catalyzes the synthesis of the hydroxymethylpyrimidine phosphate (HMP-P) moiety of thiamine from aminoimidazole ribotide (AIR) in a radical S-adenosyl-L-methionine (SAM)-dependent reaction. The polypeptide is Phosphomethylpyrimidine synthase (Geobacillus thermodenitrificans (strain NG80-2)).